A 123-amino-acid chain; its full sequence is Large ribosomal subunit protein bL19 (123 aa).

It belongs to the bacterial ribosomal protein bL19 family.

This protein is located at the 30S-50S ribosomal subunit interface and may play a role in the structure and function of the aminoacyl-tRNA binding site. This is Large ribosomal subunit protein bL19 from Bdellovibrio bacteriovorus (strain ATCC 15356 / DSM 50701 / NCIMB 9529 / HD100).